Consider the following 389-residue polypeptide: Cobalt-precorrin-5B C(1)-methyltransferase (389 aa).

The disordered stretch occupies residues 1–25 (MESRADHAVPADEGHGATEPPRGRD).

This sequence belongs to the CbiD family.

The catalysed reaction is Co-precorrin-5B + S-adenosyl-L-methionine = Co-precorrin-6A + S-adenosyl-L-homocysteine. It functions in the pathway cofactor biosynthesis; adenosylcobalamin biosynthesis; cob(II)yrinate a,c-diamide from sirohydrochlorin (anaerobic route): step 6/10. In terms of biological role, catalyzes the methylation of C-1 in cobalt-precorrin-5B to form cobalt-precorrin-6A. This Nitratidesulfovibrio vulgaris (strain ATCC 29579 / DSM 644 / CCUG 34227 / NCIMB 8303 / VKM B-1760 / Hildenborough) (Desulfovibrio vulgaris) protein is Cobalt-precorrin-5B C(1)-methyltransferase.